A 370-amino-acid polypeptide reads, in one-letter code: Sensor protein GtcS (370 aa).

The next 2 membrane-spanning stretches (helical) occupy residues 2 to 22 and 40 to 60; these read ITAYILFTVTVGVTNSIVFYL and AWIVAWRLMEMVIFALSVYLY. The 53-residue stretch at 66 to 118 folds into the HAMP domain; the sequence is KRITGPLEKITDAIQKMREGEFAQRLCFKADYELTLIQEHFNEMVAHLEKTEA. Positions 133–355 constitute a Histidine kinase domain; the sequence is DLSHDFKTPI…RLENDLPYRL (223 aa).

It is found in the cell membrane. The enzyme catalyses ATP + protein L-histidine = ADP + protein N-phospho-L-histidine.. Functionally, member of the two-component regulatory system GtcS/GtcR which may act in the control of the transcription of the grs operon which encodes the multienzymes involved in the biosynthesis of the peptide antibiotic gramicidin S. Probably activates GtcR by phosphorylation. This Aneurinibacillus migulanus (Bacillus migulanus) protein is Sensor protein GtcS (gtcS).